The following is a 96-amino-acid chain: uncharacterized protein (96 aa).

Residues 38 to 91 (IEQLRKGTGLKIDDFARVLGVSVAMVKEWESRRVKPSSAELKLMRLIQANPALS) form the HTH cro/C1-type domain. The H-T-H motif DNA-binding region spans 49-68 (IDDFARVLGVSVAMVKEWES).

This is an uncharacterized protein from Escherichia coli O157:H7.